The sequence spans 130 residues: Phosphoribosyl-AMP cyclohydrolase (130 aa).

A Mg(2+)-binding site is contributed by Asp-77. Residue Cys-78 participates in Zn(2+) binding. Residues Asp-79 and Asp-81 each contribute to the Mg(2+) site. Zn(2+) is bound by residues Cys-95 and Cys-102.

Belongs to the PRA-CH family. In terms of assembly, homodimer. Mg(2+) serves as cofactor. It depends on Zn(2+) as a cofactor.

The protein resides in the cytoplasm. The enzyme catalyses 1-(5-phospho-beta-D-ribosyl)-5'-AMP + H2O = 1-(5-phospho-beta-D-ribosyl)-5-[(5-phospho-beta-D-ribosylamino)methylideneamino]imidazole-4-carboxamide. The protein operates within amino-acid biosynthesis; L-histidine biosynthesis; L-histidine from 5-phospho-alpha-D-ribose 1-diphosphate: step 3/9. In terms of biological role, catalyzes the hydrolysis of the adenine ring of phosphoribosyl-AMP. This is Phosphoribosyl-AMP cyclohydrolase from Pseudomonas putida (strain GB-1).